Here is a 447-residue protein sequence, read N- to C-terminus: GTPase Der (447 aa).

2 consecutive EngA-type G domains span residues Lys-4–Glu-165 and Leu-180–Asn-357. GTP-binding positions include Gly-10–Ser-17, Asp-57–Leu-61, Asn-119–Glu-122, Gly-186–Ser-193, Asp-233–Leu-237, and Asn-298–Asp-301. In terms of domain architecture, KH-like spans Lys-358–Lys-443.

Belongs to the TRAFAC class TrmE-Era-EngA-EngB-Septin-like GTPase superfamily. EngA (Der) GTPase family. Associates with the 50S ribosomal subunit.

In terms of biological role, GTPase that plays an essential role in the late steps of ribosome biogenesis. The chain is GTPase Der from Rickettsia typhi (strain ATCC VR-144 / Wilmington).